A 246-amino-acid polypeptide reads, in one-letter code: Probable transcriptional regulatory protein HAPS_0943 (246 aa).

Belongs to the TACO1 family.

It localises to the cytoplasm. This chain is Probable transcriptional regulatory protein HAPS_0943, found in Glaesserella parasuis serovar 5 (strain SH0165) (Haemophilus parasuis).